A 126-amino-acid chain; its full sequence is Small ribosomal subunit protein uS12 (126 aa).

3-methylthioaspartic acid is present on D89.

It belongs to the universal ribosomal protein uS12 family. In terms of assembly, part of the 30S ribosomal subunit. Contacts proteins S8 and S17. May interact with IF1 in the 30S initiation complex.

Its function is as follows. With S4 and S5 plays an important role in translational accuracy. In terms of biological role, interacts with and stabilizes bases of the 16S rRNA that are involved in tRNA selection in the A site and with the mRNA backbone. Located at the interface of the 30S and 50S subunits, it traverses the body of the 30S subunit contacting proteins on the other side and probably holding the rRNA structure together. The combined cluster of proteins S8, S12 and S17 appears to hold together the shoulder and platform of the 30S subunit. The chain is Small ribosomal subunit protein uS12 from Sulfurimonas denitrificans (strain ATCC 33889 / DSM 1251) (Thiomicrospira denitrificans (strain ATCC 33889 / DSM 1251)).